Here is a 179-residue protein sequence, read N- to C-terminus: Large ribosomal subunit protein uL6 (179 aa).

It belongs to the universal ribosomal protein uL6 family. In terms of assembly, part of the 50S ribosomal subunit.

This protein binds to the 23S rRNA, and is important in its secondary structure. It is located near the subunit interface in the base of the L7/L12 stalk, and near the tRNA binding site of the peptidyltransferase center. The protein is Large ribosomal subunit protein uL6 of Rhodococcus erythropolis (strain PR4 / NBRC 100887).